The following is a 363-amino-acid chain: tRNA N6-adenosine threonylcarbamoyltransferase (363 aa).

The Fe cation site is built by His121 and His125. Substrate contacts are provided by residues 143–147, Asp176, Gly189, and Asn287; that span reads LASGG. Asp315 provides a ligand contact to Fe cation.

Belongs to the KAE1 / TsaD family. Requires Fe(2+) as cofactor.

It is found in the cytoplasm. It catalyses the reaction L-threonylcarbamoyladenylate + adenosine(37) in tRNA = N(6)-L-threonylcarbamoyladenosine(37) in tRNA + AMP + H(+). Required for the formation of a threonylcarbamoyl group on adenosine at position 37 (t(6)A37) in tRNAs that read codons beginning with adenine. Is involved in the transfer of the threonylcarbamoyl moiety of threonylcarbamoyl-AMP (TC-AMP) to the N6 group of A37, together with TsaE and TsaB. TsaD likely plays a direct catalytic role in this reaction. In Rhodopseudomonas palustris (strain BisA53), this protein is tRNA N6-adenosine threonylcarbamoyltransferase.